Reading from the N-terminus, the 44-residue chain is Large ribosomal subunit protein bL34 (44 aa).

Composition is skewed to basic residues over residues 1 to 14 (MKRT…KRQK) and 31 to 44 (LSAR…RLAV). The segment at 1 to 44 (MKRTLGGTTRKRQKTSGFRARMRTASGRRVLSARRRRGRHRLAV) is disordered.

This sequence belongs to the bacterial ribosomal protein bL34 family.

This chain is Large ribosomal subunit protein bL34, found in Gloeobacter violaceus (strain ATCC 29082 / PCC 7421).